Reading from the N-terminus, the 601-residue chain is Kelch repeat and BTB domain-containing protein 8 (601 aa).

One can recognise a BTB domain in the interval 48-116 (TDIVVEVDHG…AYTSRVTLTE (69 aa)). A BACK domain is found at 151–253 (CIGVFMFADA…LEEAFLSRIP (103 aa)). 5 Kelch repeats span residues 336-390 (DIFI…HCCG), 391-441 (KLYA…EYKD), 443-481 (IYVL…LHKN), 482-529 (CIYY…KVLL), and 542-588 (QVMV…FECV).

The protein belongs to the KBTBD8 family. Component of the BCR(KBTBD8) E3 ubiquitin ligase complex.

The protein localises to the cytoplasm. It is found in the cytoskeleton. Its subcellular location is the spindle. It localises to the golgi apparatus. Substrate-specific adapter of a BCR (BTB-CUL3-RBX1) E3 ubiquitin ligase complex that acts as a regulator of neural crest specification. The BCR(KBTBD8) complex acts by mediating monoubiquitination of target proteins. This chain is Kelch repeat and BTB domain-containing protein 8 (kbtbd8), found in Danio rerio (Zebrafish).